We begin with the raw amino-acid sequence, 240 residues long: Large ribosomal subunit protein uL2 (240 aa).

Positions 1 to 10 are enriched in polar residues; that stretch reads MGHRISTQSR. Disordered stretches follow at residues 1-20 and 204-240; these read MGHR…YRAP and FGGG…GYRR.

This sequence belongs to the universal ribosomal protein uL2 family. As to quaternary structure, part of the 50S ribosomal subunit. Forms a bridge to the 30S subunit in the 70S ribosome.

In terms of biological role, one of the primary rRNA binding proteins. Required for association of the 30S and 50S subunits to form the 70S ribosome, for tRNA binding and peptide bond formation. It has been suggested to have peptidyltransferase activity; this is somewhat controversial. Makes several contacts with the 16S rRNA in the 70S ribosome. In Methanocorpusculum labreanum (strain ATCC 43576 / DSM 4855 / Z), this protein is Large ribosomal subunit protein uL2.